Consider the following 188-residue polypeptide: SAYSvFN domain-containing protein 1 (188 aa).

A compositionally biased stretch (basic and acidic residues) spans 1-10 (MEQRLAEFRE). Disordered regions lie at residues 1–43 (MEQR…ATPK) and 60–80 (AIAQAQPNQPQEAGQQLPEST). Residues 1–100 (MEQRLAEFRE…SFLTNITFLK (100 aa)) are Cytoplasmic-facing. Composition is skewed to low complexity over residues 22-43 (STSSQSVQTSGAKAEPAAATPK) and 60-75 (AIAQAQPNQPQEAGQQ). The segment at 86–100 (SSCRQSFLTNITFLK) is middle helical (MH). Positions 101–121 (VLLWLVLLGLFVELEFGLAYF) form an intramembrane region, helical. The Cytoplasmic portion of the chain corresponds to 122–188 (VLSMFYWMYV…RTSPSCSSYP (67 aa)).

Belongs to the SAYSD1 family. Associates (via N-terminus) with ribosomes. Enriched in testis; predominantly expressed in round and elongating spermatids.

The protein localises to the endoplasmic reticulum membrane. The protein resides in the cytoplasmic vesicle membrane. Functionally, ufmylation 'reader' component of a translocation-associated quality control pathway, a mechanism that takes place when a ribosome has stalled during translation, and which is required to degrade clogged substrates. Specifically recognizes and binds ufmylated ribosomes when a ribosome has stalled, promoting the transport of stalled nascent chain via the TRAPP complex to lysosomes for degradation. This is SAYSvFN domain-containing protein 1 from Mus musculus (Mouse).